The following is a 360-amino-acid chain: Spore germination protein GerQB (360 aa).

10 consecutive transmembrane segments (helical) span residues 11–31 (SPYM…MLGF), 45–65 (ISTL…YQIL), 84–104 (IGGL…ATTL), 116–136 (FPSI…YYIV), 142–162 (VVAG…FTFF), 188–208 (MKGN…YPFI), 220–240 (YANL…LAFF), 270–290 (IIVS…LWGV), 300–320 (IKQK…SFFL), and 331–351 (TWTG…LWLI).

Belongs to the amino acid-polyamine-organocation (APC) superfamily. Spore germination protein (SGP) (TC 2.A.3.9) family.

It localises to the membrane. Required for the germination response to inosine. Has no role in L-alanine germination. This chain is Spore germination protein GerQB (gerQB), found in Bacillus cereus.